The primary structure comprises 99 residues: Complement inhibitor RaCI7 (99 aa).

The signal sequence occupies residues 1-24; that stretch reads MAALNGLVLLLLTISAMFISECYS. Cystine bridges form between C37–C61, C42–C63, and C57–C78.

Belongs to the RaCI family. In terms of tissue distribution, expressed in salivary glands.

Its subcellular location is the secreted. Functionally, complement inhibitor. Prevents complement-mediated C5 activation by binding to C5. Binds C5 at a different binding site than the other tick complement inhibitors OmCI and CirpT1, and the drug eculizumab. In Dermacentor andersoni (Rocky mountain wood tick), this protein is Complement inhibitor RaCI7.